The following is a 415-amino-acid chain: MKGSYKSRWVIVIVVVIAAIAAFWFWQGRNDSQSAAPGATKQAQQSPAGGRRGMRSGPLAPVQAATAVEQAVPRYLTGLGTITAANTVTVRSRVDGQLMALHFQEGQQVKAGDLLAEIDPSQFKVALAQAQGQLAKDKATLANARRDLARYQQLAKTNLVSRQELDAQQALVSETEGTIKADEASVASAQLQLDWSRITAPVDGRVGLKQVDVGNQISSGDTTGIVVITQTHPIDLVFTLPESDIATVVQAQKAGKPLVVEAWDRTNSKKLSEGTLLSLDNQIDATTGTIKVKARFNNQDDALFPNQFVNARMLVDTEQNAVVIPTAALQMGNEGHFVWVLNSENKVSKHLVTPGIQDSQKVVIRAGISAGDRVVTDGIDRLTEGAKVEVVEAQSTTTSEEKATSREYAKKGARS.

An N-terminal signal peptide occupies residues 1-21 (MKGSYKSRWVIVIVVVIAAIA). Over residues 31–47 (DSQSAAPGATKQAQQSP) the composition is skewed to polar residues. Disordered regions lie at residues 31–60 (DSQS…GPLA) and 392–415 (EAQS…GARS). Positions 399–415 (SEEKATSREYAKKGARS) are enriched in basic and acidic residues.

This sequence belongs to the membrane fusion protein (MFP) (TC 8.A.1) family. Part of a tripartite efflux system composed of MdtA, MdtB and MdtC.

The protein localises to the cell inner membrane. The MdtABC tripartite complex confers resistance against novobiocin and deoxycholate. This is Multidrug resistance protein MdtA from Escherichia coli O139:H28 (strain E24377A / ETEC).